The following is a 336-amino-acid chain: Fructose-1,6-bisphosphatase class 1 (336 aa).

The Mg(2+) site is built by glutamate 90, aspartate 112, leucine 114, and aspartate 115. Substrate contacts are provided by residues 115–118 (DGSS), asparagine 211, and lysine 277. Glutamate 283 is a binding site for Mg(2+).

This sequence belongs to the FBPase class 1 family. In terms of assembly, homotetramer. The cofactor is Mg(2+).

The protein resides in the cytoplasm. The enzyme catalyses beta-D-fructose 1,6-bisphosphate + H2O = beta-D-fructose 6-phosphate + phosphate. Its pathway is carbohydrate biosynthesis; gluconeogenesis. In Pseudomonas fluorescens (strain Pf0-1), this protein is Fructose-1,6-bisphosphatase class 1.